The following is a 1235-amino-acid chain: ATP-dependent helicase/nuclease subunit A (1235 aa).

The UvrD-like helicase ATP-binding domain occupies 3–471; the sequence is TKWTETQKSA…IKLSENFRSR (469 aa). 24–31 is an ATP binding site; the sequence is AGAGTGKT. Residues 509 to 808 form the UvrD-like helicase C-terminal domain; sequence PFEGNCGGDV…RIMSIHKSKG (300 aa).

This sequence belongs to the helicase family. AddA subfamily. Heterodimer of AddA and AddB/RexB. It depends on Mg(2+) as a cofactor.

It catalyses the reaction Couples ATP hydrolysis with the unwinding of duplex DNA by translocating in the 3'-5' direction.. The catalysed reaction is ATP + H2O = ADP + phosphate + H(+). The heterodimer acts as both an ATP-dependent DNA helicase and an ATP-dependent, dual-direction single-stranded exonuclease. Recognizes the chi site generating a DNA molecule suitable for the initiation of homologous recombination. The AddA nuclease domain is required for chi fragment generation; this subunit has the helicase and 3' -&gt; 5' nuclease activities. In Clostridium kluyveri (strain ATCC 8527 / DSM 555 / NBRC 12016 / NCIMB 10680 / K1), this protein is ATP-dependent helicase/nuclease subunit A.